Here is a 393-residue protein sequence, read N- to C-terminus: Phosphoglycerate kinase (393 aa).

Substrate contacts are provided by residues 21 to 23 (DLN), Arg-36, 59 to 62 (HLGR), Arg-113, and Arg-146. ATP-binding positions include Lys-197, Glu-319, and 345–348 (GGDT).

It belongs to the phosphoglycerate kinase family. In terms of assembly, monomer.

The protein localises to the cytoplasm. The catalysed reaction is (2R)-3-phosphoglycerate + ATP = (2R)-3-phospho-glyceroyl phosphate + ADP. It functions in the pathway carbohydrate degradation; glycolysis; pyruvate from D-glyceraldehyde 3-phosphate: step 2/5. The polypeptide is Phosphoglycerate kinase (Nitratidesulfovibrio vulgaris (strain DSM 19637 / Miyazaki F) (Desulfovibrio vulgaris)).